A 288-amino-acid polypeptide reads, in one-letter code: MKLIVVSGRSGSGKTVALRVLEDLGYYCVDNLPVSLLFQLVAELRGKYDQIAVSIDVRNLPATAEDLVSILDEIRQHQDLQFSSFFFDADNATLLKRYGESRRLHPLSRQQFTLAQAIRQETDLLSPLSSSADLRIDTSHISIHELSEQIRERVLGKKEHELVMVFESFGFKHGIAKDADFVFDARFLPNPHWIAELKPLTGLDEPVQRYLQSQPDVVKYINQLISLLETWLPQLERNNRSYVTVAIGCTGGQHRSVFIAEQLANHFLVLGKNVQRRHRTLEKLHAPG.

8-15 is a binding site for ATP; that stretch reads GRSGSGKT. A GTP-binding site is contributed by 56–59; the sequence is DVRN.

Belongs to the RapZ-like family.

Its function is as follows. Displays ATPase and GTPase activities. The chain is Nucleotide-binding protein Tola_2941 from Tolumonas auensis (strain DSM 9187 / NBRC 110442 / TA 4).